The chain runs to 456 residues: Kynurenine 3-monooxygenase (456 aa).

The protein belongs to the aromatic-ring hydroxylase family. KMO subfamily. It depends on FAD as a cofactor.

The enzyme catalyses L-kynurenine + NADPH + O2 + H(+) = 3-hydroxy-L-kynurenine + NADP(+) + H2O. It participates in cofactor biosynthesis; NAD(+) biosynthesis; quinolinate from L-kynurenine: step 1/3. Its function is as follows. Catalyzes the hydroxylation of L-kynurenine (L-Kyn) to form 3-hydroxy-L-kynurenine (L-3OHKyn). Required for synthesis of quinolinic acid. The protein is Kynurenine 3-monooxygenase of Xanthomonas campestris pv. campestris (strain 8004).